The sequence spans 387 residues: Protein kinase gsk3 (387 aa).

The Protein kinase domain occupies 32–316; it reads YTSSKVVGSG…AAEAMCHPFF (285 aa). ATP is bound by residues 38–46 and K61; that span reads VGSGSFGVV. D157 (proton acceptor) is an active-site residue. A Phosphoserine modification is found at S191. Y192 carries the post-translational modification Phosphotyrosine; by autocatalysis. S335 is modified (phosphoserine).

This sequence belongs to the protein kinase superfamily. CMGC Ser/Thr protein kinase family. GSK-3 subfamily. Post-translationally, autophosphorylated on tyrosine residues.

It is found in the cytoplasm. Its subcellular location is the nucleus. It carries out the reaction L-seryl-[protein] + ATP = O-phospho-L-seryl-[protein] + ADP + H(+). It catalyses the reaction L-threonyl-[protein] + ATP = O-phospho-L-threonyl-[protein] + ADP + H(+). Interacts with cdc14 which is thought to play a role in the initiation and completion of mitosis. Involved in the positive regulation of mis12. The chain is Protein kinase gsk3 (gsk3) from Schizosaccharomyces pombe (strain 972 / ATCC 24843) (Fission yeast).